The sequence spans 482 residues: GPI mannosyltransferase 3 (482 aa).

The chain crosses the membrane as a helical span at residues 12–32; sequence LFAFIFIFRLANSFAIETFFQ. N-linked (GlcNAc...) asparagine glycosylation occurs at Asn-80. 4 helical membrane passes run 114–134, 137–155, 175–195, and 199–219; these read KLAWITLMLSLFNPFNWYVIT, FSNNLEMVFTVLALRFWPW, IIRPTNILIWIPLGIWLLISI, and LKWVALSFLEVVLILLINTAL. A glycan (N-linked (GlcNAc...) asparagine) is linked at Asn-242. Transmembrane regions (helical) follow at residues 252-272, 274-294, and 324-344; these read WHFYIFQAIPLMLMLYLPLMI, GLKKNILLLTGLFYIIGFSLI, and FVLIGILLNICIGLFFTNVHE.

Belongs to the glycosyltransferase 22 family. PIGB subfamily.

It localises to the endoplasmic reticulum membrane. Its pathway is glycolipid biosynthesis; glycosylphosphatidylinositol-anchor biosynthesis. Mannosyltransferase involved in glycosylphosphatidylinositol-anchor biosynthesis. Transfers the third mannose to Man2-GlcN-acyl-PI during GPI precursor assembly. The chain is GPI mannosyltransferase 3 (GPI10) from Candida albicans (strain SC5314 / ATCC MYA-2876) (Yeast).